The chain runs to 169 residues: Ribosome maturation factor RimM (169 aa).

Residues P95–F168 enclose the PRC barrel domain.

The protein belongs to the RimM family. As to quaternary structure, binds ribosomal protein uS19.

The protein localises to the cytoplasm. Functionally, an accessory protein needed during the final step in the assembly of 30S ribosomal subunit, possibly for assembly of the head region. Essential for efficient processing of 16S rRNA. May be needed both before and after RbfA during the maturation of 16S rRNA. It has affinity for free ribosomal 30S subunits but not for 70S ribosomes. This Prosthecochloris aestuarii (strain DSM 271 / SK 413) protein is Ribosome maturation factor RimM.